We begin with the raw amino-acid sequence, 369 residues long: Nuclear pore complex-interacting protein family member A7 (369 aa).

The interval 151–171 (SMKEREHREEERQVSEAEENG) is disordered.

The protein belongs to the NPIP family.

This is Nuclear pore complex-interacting protein family member A7 (NPIPA7) from Homo sapiens (Human).